The chain runs to 1660 residues: Cortactin-binding protein 2 (1660 aa).

4 disordered regions span residues 1–26 (MATD…TAEA), 203–222 (KKKT…RSTE), 366–440 (IGVS…LHPG), and 454–478 (GNAN…SPTS). The stretch at 119 to 276 (RKMQERMSAQ…EQLKRGSDSK (158 aa)) forms a coiled coil. Residues 386–396 (PSTGSTPDPTS) show a composition bias toward low complexity. The segment covering 411–422 (QTPGITPQNSQA) has biased composition (polar residues). Arg-498 carries the asymmetric dimethylarginine modification. The interval 499–596 (FTGPQAGAPP…PPSSLPQGNR (98 aa)) is disordered. A compositionally biased stretch (polar residues) spans 583–593 (TVASPPSSLPQ). ANK repeat units follow at residues 709 to 739 (GRPT…DINY), 743 to 772 (DGHS…QVNA), 776 to 805 (NGFT…HINH), 809 to 838 (GGQT…DRSV), and 842 to 871 (DGWT…PAHG). Positions 872 to 897 (NSFSEEESESGVFDLDGEEESPEGKS) are disordered. Over residues 875-892 (SEEESESGVFDLDGEEES) the composition is skewed to acidic residues. One copy of the ANK 6 repeat lies at 912–942 (EGWTAAHIAASKGFKNCLEILCRHGGLETER). The tract at residues 1445 to 1477 (CSKKKGESGSWRKVNTSPRRKSGRFSLPTWNKP) is disordered. Position 1524 is a phosphoserine (Ser-1524). Residues 1617–1660 (RSKVTQCSQNTKSSSSNTRQIEINNSKEENWNFHKNEHLEKPNK) are disordered. The span at 1619–1640 (KVTQCSQNTKSSSSNTRQIEIN) shows a compositional bias: polar residues. Over residues 1641-1660 (NSKEENWNFHKNEHLEKPNK) the composition is skewed to basic and acidic residues.

As to quaternary structure, interacts with CTTN/cortactin SH3 domain. Interacts with STRN, STRN4/zinedin and MOB4/phocein; this interactions mediate the association with the STRIPAK core complex and may regulate dendritic spine distribution of the STRIPAK complex in hippocampal neurons. Activation of glutamate receptors weakens the interaction with STRN and STRN4.

It is found in the cytoplasm. The protein resides in the cell cortex. The protein localises to the cell projection. Its subcellular location is the dendritic spine. In terms of biological role, regulates the dendritic spine distribution of CTTN/cortactin in hippocampal neurons, and thus controls dendritic spinogenesis and dendritic spine maintenance. Associates with the striatin-interacting phosphatase and kinase (STRIPAK) core complex to regulate dendritic spine distribution of the STRIPAK complex in hippocampal neurons. The polypeptide is Cortactin-binding protein 2 (CTTNBP2) (Ateles geoffroyi (Black-handed spider monkey)).